Reading from the N-terminus, the 639-residue chain is 3D-(3,5/4)-trihydroxycyclohexane-1,2-dione hydrolase (639 aa).

Residue E62 participates in thiamine diphosphate binding. Residues 438 to 518 (SLPGDLQRMW…INILLFDNCG (81 aa)) are thiamine pyrophosphate binding. 2 residues coordinate Mg(2+): D489 and N516.

This sequence belongs to the TPP enzyme family. The cofactor is Mg(2+). It depends on thiamine diphosphate as a cofactor.

It carries out the reaction 3D-3,5/4-trihydroxycyclohexane-1,2-dione + H2O = 5-deoxy-D-glucuronate + H(+). It functions in the pathway polyol metabolism; myo-inositol degradation into acetyl-CoA; acetyl-CoA from myo-inositol: step 3/7. Functionally, involved in the cleavage of the C1-C2 bond of 3D-(3,5/4)-trihydroxycyclohexane-1,2-dione (THcHDO) to yield 5-deoxy-glucuronate (5DG). This Clostridium perfringens (strain 13 / Type A) protein is 3D-(3,5/4)-trihydroxycyclohexane-1,2-dione hydrolase.